Here is a 250-residue protein sequence, read N- to C-terminus: 2,3-bisphosphoglycerate-dependent phosphoglycerate mutase (250 aa).

Residues 10–17 (RHGESQWN), 23–24 (TG), Arg62, 89–92 (ERHY), Lys100, 116–117 (RR), and 185–186 (GN) contribute to the substrate site. Residue His11 is the Tele-phosphohistidine intermediate of the active site. Glu89 (proton donor/acceptor) is an active-site residue.

Belongs to the phosphoglycerate mutase family. BPG-dependent PGAM subfamily. In terms of assembly, homodimer.

It carries out the reaction (2R)-2-phosphoglycerate = (2R)-3-phosphoglycerate. It participates in carbohydrate degradation; glycolysis; pyruvate from D-glyceraldehyde 3-phosphate: step 3/5. Catalyzes the interconversion of 2-phosphoglycerate and 3-phosphoglycerate. The polypeptide is 2,3-bisphosphoglycerate-dependent phosphoglycerate mutase (Shigella dysenteriae serotype 1 (strain Sd197)).